We begin with the raw amino-acid sequence, 257 residues long: 3-deoxy-manno-octulosonate cytidylyltransferase (257 aa).

The protein belongs to the KdsB family.

Its subcellular location is the cytoplasm. It catalyses the reaction 3-deoxy-alpha-D-manno-oct-2-ulosonate + CTP = CMP-3-deoxy-beta-D-manno-octulosonate + diphosphate. Its pathway is nucleotide-sugar biosynthesis; CMP-3-deoxy-D-manno-octulosonate biosynthesis; CMP-3-deoxy-D-manno-octulosonate from 3-deoxy-D-manno-octulosonate and CTP: step 1/1. It functions in the pathway bacterial outer membrane biogenesis; lipopolysaccharide biosynthesis. In terms of biological role, activates KDO (a required 8-carbon sugar) for incorporation into bacterial lipopolysaccharide in Gram-negative bacteria. The sequence is that of 3-deoxy-manno-octulosonate cytidylyltransferase from Stenotrophomonas maltophilia (strain R551-3).